Reading from the N-terminus, the 452-residue chain is Phosphoglucosamine mutase (452 aa).

S88 (phosphoserine intermediate) is an active-site residue. Mg(2+)-binding residues include S88, D234, D236, and D238. Position 88 is a phosphoserine (S88).

Belongs to the phosphohexose mutase family. Mg(2+) is required as a cofactor. Post-translationally, activated by phosphorylation.

It catalyses the reaction alpha-D-glucosamine 1-phosphate = D-glucosamine 6-phosphate. In terms of biological role, catalyzes the conversion of glucosamine-6-phosphate to glucosamine-1-phosphate. The chain is Phosphoglucosamine mutase from Methanococcus aeolicus (strain ATCC BAA-1280 / DSM 17508 / OCM 812 / Nankai-3).